Reading from the N-terminus, the 279-residue chain is Probable diacylglycerol pyrophosphate phosphatase 1 (279 aa).

Residues 1-17 (MEAVGKHVKLFWNVYSD) are Lumenal-facing. Residues 18-38 (YAVLIAISLSYFVFDVLMLPF) traverse the membrane as a helical segment. The Cytoplasmic portion of the chain corresponds to 39–58 (TRQFSLEDITISHPFALHEQ). The helical transmembrane segment at 59–79 (VPTKYLGIICVFFPALVLYGF) threads the bilayer. Topologically, residues 80–86 (GKLRNNS) are lumenal. Residues 87-107 (LLFWKSLMGLLYSTMVCGLCV) traverse the membrane as a helical segment. The Cytoplasmic portion of the chain corresponds to 108 to 163 (SLLKNAVGRPRPDFLARCQPFESTPKTGLVDVLSCSVPWSDKVLQDGFRSFPSGHT). Residues 111-119 (KNAVGRPRP) are phosphatase sequence motif I. Residues 159 to 162 (PSGH) form a phosphatase sequence motif II region. The chain crosses the membrane as a helical span at residues 164 to 184 (SFSFAGLGFLAIFLAGQLKMF). Topologically, residues 185–187 (RNK) are lumenal. The helical transmembrane segment at 188-208 (TSSWKVVVPLVPLSIASWIGL) threads the bilayer. Over 209 to 220 (SRSQDYRHHKED) the chain is Cytoplasmic. Residues 209–220 (SRSQDYRHHKED) form a phosphatase sequence motif III region. Residues 221–241 (IAVGALFGFAIAYVVYRQLFP) form a helical membrane-spanning segment. At 242-279 (PLDHHNADILYVQAELDEGYTNVHSAGNSSATNAEQMV) the chain is on the lumenal side.

It belongs to the PA-phosphatase related phosphoesterase family.

The protein localises to the vacuole membrane. It localises to the endoplasmic reticulum membrane. It catalyses the reaction a 1,2-diacyl-sn-glycerol 3-diphosphate + H2O = a 1,2-diacyl-sn-glycero-3-phosphate + phosphate + H(+). The catalysed reaction is a 1,2-diacyl-sn-glycero-3-phosphate + H2O = a 1,2-diacyl-sn-glycerol + phosphate. Its function is as follows. Catalyzes the dephosphorylation of diacylglycerol phosphate (DGPP) to phosphatidate (PA) and the subsequent dephosphorylation of PA to diacylglycerol (DAG). This Schizosaccharomyces pombe (strain 972 / ATCC 24843) (Fission yeast) protein is Probable diacylglycerol pyrophosphate phosphatase 1 (dpp1).